Here is a 439-residue protein sequence, read N- to C-terminus: Structure-specific endonuclease subunit SLX1 homolog (439 aa).

2 disordered regions span residues 1 to 28 and 117 to 140; these read METFILSSDSDDDCPPPPKRRSIEGVPK and DDDDDDEKESSTEHADDDLNLRAL. A compositionally biased stretch (basic and acidic residues) spans 125-136; sequence ESSTEHADDDLN. The GIY-YIG domain maps to 166–253; the sequence is EFYGVYCLIS…PAVSKSLKEK (88 aa). Residues 335-390 form an SLX1-type zinc finger; it reads CRLCGKDIEKLWGLVRCISQSCHSHFHSKCLAEHGLKNKNEYADQIYPLKSNCPIC.

Belongs to the SLX1 family. As to quaternary structure, forms a heterodimer with him-18/slx-4. A divalent metal cation serves as cofactor.

The protein resides in the nucleus. Catalytic subunit of a heterodimeric structure-specific endonuclease that resolves DNA secondary structures generated during DNA repair and recombination. Has endonuclease activity towards branched DNA substrates, introducing single-strand cuts in duplex DNA close to junctions with ss-DNA (Potential). Has a preference for replication forks over 5' flap structures or Holliday junctions and shows much lower activity toward 3' flap structures. Required for proper crossover distribution through inhibition of crossover formation at the central region of chromosomes. This chain is Structure-specific endonuclease subunit SLX1 homolog, found in Caenorhabditis briggsae.